Consider the following 220-residue polypeptide: Pyridoxine/pyridoxamine 5'-phosphate oxidase (220 aa).

Substrate contacts are provided by residues 13-16 (RVEY) and Lys-77. FMN is bound by residues 72–77 (RTVLCK), 87–88 (FT), Lys-94, and Gln-116. The substrate site is built by Tyr-134, Arg-138, and Ser-142. FMN contacts are provided by residues 151 to 152 (QS) and Trp-197. 203–205 (RVH) serves as a coordination point for substrate. Arg-207 contributes to the FMN binding site.

The protein belongs to the pyridoxamine 5'-phosphate oxidase family. As to quaternary structure, homodimer. FMN serves as cofactor.

It catalyses the reaction pyridoxamine 5'-phosphate + O2 + H2O = pyridoxal 5'-phosphate + H2O2 + NH4(+). The catalysed reaction is pyridoxine 5'-phosphate + O2 = pyridoxal 5'-phosphate + H2O2. Its pathway is cofactor metabolism; pyridoxal 5'-phosphate salvage; pyridoxal 5'-phosphate from pyridoxamine 5'-phosphate: step 1/1. It functions in the pathway cofactor metabolism; pyridoxal 5'-phosphate salvage; pyridoxal 5'-phosphate from pyridoxine 5'-phosphate: step 1/1. Functionally, catalyzes the oxidation of either pyridoxine 5'-phosphate (PNP) or pyridoxamine 5'-phosphate (PMP) into pyridoxal 5'-phosphate (PLP). The protein is Pyridoxine/pyridoxamine 5'-phosphate oxidase of Mycobacterium sp. (strain KMS).